A 1016-amino-acid polypeptide reads, in one-letter code: Rho family-interacting cell polarization regulator 2 (1016 aa).

2 positions are modified to phosphoserine: serine 21 and serine 37. The interval 44-73 (AVKKPQAKLKKMHNLGHKNSSPPKEPQPKR) is disordered. A compositionally biased stretch (basic residues) spans 48-59 (PQAKLKKMHNLG). Positions 55 to 113 (MHNLGHKNSSPPKEPQPKRVEEVYRALKNGLDEYLEVHQTELDKLTTQLKDMRRNSRLG) are involved in cell filopodia formation. A coiled-coil region spans residues 85–112 (LDEYLEVHQTELDKLTTQLKDMRRNSRL). A Phosphoserine modification is found at serine 341. A compositionally biased stretch (polar residues) spans 414 to 428 (TSTELPPGSQSSQNE). The tract at residues 414–469 (TSTELPPGSQSSQNEGLKDSSSASCSSSSREGSEPRPHPEGETQGLGKPEGCPVAT) is disordered. Over residues 433-442 (SSSASCSSSS) the composition is skewed to low complexity. A compositionally biased stretch (basic and acidic residues) spans 444 to 454 (EGSEPRPHPEG). Residues serine 520 and serine 532 each carry the phosphoserine modification. The segment at 636–656 (DSVFSDTETEKNSYRSVHPEA) is disordered. Residues 643 to 656 (ETEKNSYRSVHPEA) show a composition bias toward basic and acidic residues.

This sequence belongs to the RIPOR family. As to quaternary structure, homooligomer; homooligomerization is regulated by RHOC and leads to the formation of concatemers through the association of N- and C-termini. Interacts (phosphorylated form) with 14-3-3 proteins; these interactions occur during myogenic cell differentiation and also induces T cell proliferation arrest. Interacts (phosphorylated form) with HDAC6; this interaction occurs during early myogenic differentiation, prevents HDAC6 to deacetylate tubulin and also induces T cell proliferation arrest. Interacts with DYSF; this interaction occurs during early myogenic differentiation. Interacts with MYOF. Interacts (via active GTP- or inactive GDP-bound forms) with RHOA; this interaction is direct, blocks the loading of GTP to RHOA and decreases upon chemokine CCL19 stimulation in primary T lymphocytes. Interacts with RHOC. Interacts (via phosphorylated form) with YWHAB; this interaction occurs in a chemokine-dependent manner and does not compete for binding of RIPOR2 with RHOA nor blocks inhibition of RIPOR2-mediated RHOA activity. Interacts with YWHAE. Interacts with YWHAQ. Post-translationally, phosphorylated. Chemokine-induced phosphorylation in neutrophils occurs in a PKC- and AKT-dependent manner, resulting in RIPOR2 interaction with YWHAB and stabilization. Phosphorylated by PKCA, AKT1 and MAPKAPK1A; in vitro.

It is found in the cytoplasm. The protein localises to the cytoskeleton. The protein resides in the cell projection. Its subcellular location is the filopodium. It localises to the apical cell membrane. It is found in the stereocilium. The protein localises to the stereocilium membrane. In terms of biological role, acts as an inhibitor of the small GTPase RHOA and plays several roles in the regulation of myoblast and hair cell differentiation, lymphocyte T proliferation and neutrophil polarization. Plays a role in fetal mononuclear myoblast differentiation by promoting filopodia and myotube formation. Maintains naive T lymphocytes in a quiescent state and prevents chemokine-induced T lymphocyte responses, such as cell adhesion, polarization and migration. Involved also in the regulation of neutrophil polarization, chemotaxis and adhesion. Required for normal development of inner and outer hair cell stereocilia within the cochlea of the inner ear. Plays a role for maintaining the structural organization of the basal domain of stereocilia. Involved in mechanosensory hair cell function. Required for normal hearing. This Bos taurus (Bovine) protein is Rho family-interacting cell polarization regulator 2.